Consider the following 714-residue polypeptide: Hormonally up-regulated neu tumor-associated kinase (714 aa).

Over residues 1–15 (MPAAAGDGLLGEPAA) the composition is skewed to low complexity. Positions 1–26 (MPAAAGDGLLGEPAAPGGGGGAEDAA) are disordered. The Protein kinase domain maps to 62–320 (LIGSRKLGEG…IQQALANRWL (259 aa)). Residues 68–76 (LGEGSFAKV) and Lys91 contribute to the ATP site. Asp186 acts as the Proton acceptor in catalysis. Over residues 437 to 461 (KKPKEQEKRGDFLHRPFSKKLDKNL) the composition is skewed to basic and acidic residues. Disordered regions lie at residues 437 to 471 (KKPK…SGSL), 518 to 552 (MEFI…HKED), and 590 to 615 (ARRN…HTPL). A compositionally biased stretch (low complexity) spans 599–611 (LSPGLPSGSMSPL).

The protein belongs to the protein kinase superfamily. CAMK Ser/Thr protein kinase family. SNF1 subfamily.

It carries out the reaction L-seryl-[protein] + ATP = O-phospho-L-seryl-[protein] + ADP + H(+). The enzyme catalyses L-threonyl-[protein] + ATP = O-phospho-L-threonyl-[protein] + ADP + H(+). The sequence is that of Hormonally up-regulated neu tumor-associated kinase (HUNK) from Homo sapiens (Human).